Consider the following 888-residue polypeptide: Calcium-transporting ATPase 1 (888 aa).

Helical transmembrane passes span 53–75 (IFAQ…SAFV), 79–97 (ADAS…IGVV), 246–266 (VGKY…LIGF), and 283–303 (AVAA…AIGV). Residues Val284, Ala285, Ile287, and Glu289 each coordinate Ca(2+). Asp331 acts as the 4-aspartylphosphate intermediate in catalysis. Transmembrane regions (helical) follow at residues 675–695 (ILFL…AILL), 703–723 (PIHI…SLGV), 747–767 (VPFL…AFIA), 791–811 (LLHA…VHSF), 831–851 (LVFS…IPPL), and 865–885 (WGFV…IKLA). Ca(2+) contacts are provided by Asn710 and Asp714.

It belongs to the cation transport ATPase (P-type) (TC 3.A.3) family. Type IIA subfamily.

Its subcellular location is the cell membrane. It catalyses the reaction Ca(2+)(in) + ATP + H2O = Ca(2+)(out) + ADP + phosphate + H(+). Inhibited by cyclopiazonic acid (CPA). Its function is as follows. Catalyzes the hydrolysis of ATP coupled with the transport of calcium. In Bacillus cereus (strain ATCC 10987 / NRS 248), this protein is Calcium-transporting ATPase 1.